A 459-amino-acid chain; its full sequence is Bifunctional protein GlmU (459 aa).

Residues 1–229 (MSNFAIILAA…FDESLGVNDR (229 aa)) are pyrophosphorylase. UDP-N-acetyl-alpha-D-glucosamine-binding positions include 8-11 (LAAG), lysine 22, glutamine 72, and 77-78 (GT). Mg(2+) is bound at residue aspartate 102. Residues glycine 139, glutamate 154, asparagine 169, and asparagine 227 each coordinate UDP-N-acetyl-alpha-D-glucosamine. Position 227 (asparagine 227) interacts with Mg(2+). A linker region spans residues 230–250 (VALATAESVMRRRINHKHMVN). The interval 251 to 459 (GVSFVNPEAT…TRLPHHPKNQ (209 aa)) is N-acetyltransferase. UDP-N-acetyl-alpha-D-glucosamine is bound by residues arginine 332 and lysine 350. Histidine 362 acts as the Proton acceptor in catalysis. Residues tyrosine 365 and asparagine 376 each contribute to the UDP-N-acetyl-alpha-D-glucosamine site. Residues alanine 379, 385 to 386 (NY), serine 404, alanine 422, and arginine 439 contribute to the acetyl-CoA site.

This sequence in the N-terminal section; belongs to the N-acetylglucosamine-1-phosphate uridyltransferase family. It in the C-terminal section; belongs to the transferase hexapeptide repeat family. As to quaternary structure, homotrimer. Requires Mg(2+) as cofactor.

It is found in the cytoplasm. The catalysed reaction is alpha-D-glucosamine 1-phosphate + acetyl-CoA = N-acetyl-alpha-D-glucosamine 1-phosphate + CoA + H(+). It catalyses the reaction N-acetyl-alpha-D-glucosamine 1-phosphate + UTP + H(+) = UDP-N-acetyl-alpha-D-glucosamine + diphosphate. It functions in the pathway nucleotide-sugar biosynthesis; UDP-N-acetyl-alpha-D-glucosamine biosynthesis; N-acetyl-alpha-D-glucosamine 1-phosphate from alpha-D-glucosamine 6-phosphate (route II): step 2/2. Its pathway is nucleotide-sugar biosynthesis; UDP-N-acetyl-alpha-D-glucosamine biosynthesis; UDP-N-acetyl-alpha-D-glucosamine from N-acetyl-alpha-D-glucosamine 1-phosphate: step 1/1. The protein operates within bacterial outer membrane biogenesis; LPS lipid A biosynthesis. Its function is as follows. Catalyzes the last two sequential reactions in the de novo biosynthetic pathway for UDP-N-acetylglucosamine (UDP-GlcNAc). The C-terminal domain catalyzes the transfer of acetyl group from acetyl coenzyme A to glucosamine-1-phosphate (GlcN-1-P) to produce N-acetylglucosamine-1-phosphate (GlcNAc-1-P), which is converted into UDP-GlcNAc by the transfer of uridine 5-monophosphate (from uridine 5-triphosphate), a reaction catalyzed by the N-terminal domain. This Streptococcus pneumoniae (strain 70585) protein is Bifunctional protein GlmU.